Here is a 321-residue protein sequence, read N- to C-terminus: Methionyl-tRNA formyltransferase (321 aa).

Residue 112-115 participates in (6S)-5,6,7,8-tetrahydrofolate binding; that stretch reads GLLP.

Belongs to the Fmt family.

It carries out the reaction L-methionyl-tRNA(fMet) + (6R)-10-formyltetrahydrofolate = N-formyl-L-methionyl-tRNA(fMet) + (6S)-5,6,7,8-tetrahydrofolate + H(+). Its function is as follows. Attaches a formyl group to the free amino group of methionyl-tRNA(fMet). The formyl group appears to play a dual role in the initiator identity of N-formylmethionyl-tRNA by promoting its recognition by IF2 and preventing the misappropriation of this tRNA by the elongation apparatus. The sequence is that of Methionyl-tRNA formyltransferase from Chlamydia caviae (strain ATCC VR-813 / DSM 19441 / 03DC25 / GPIC) (Chlamydophila caviae).